The following is a 147-amino-acid chain: Large ribosomal subunit protein uL22 (147 aa).

This sequence belongs to the universal ribosomal protein uL22 family. Part of the 50S ribosomal subunit.

In terms of biological role, this protein binds specifically to 23S rRNA; its binding is stimulated by other ribosomal proteins, e.g. L4, L17, and L20. It is important during the early stages of 50S assembly. It makes multiple contacts with different domains of the 23S rRNA in the assembled 50S subunit and ribosome. Functionally, the globular domain of the protein is located near the polypeptide exit tunnel on the outside of the subunit, while an extended beta-hairpin is found that lines the wall of the exit tunnel in the center of the 70S ribosome. The chain is Large ribosomal subunit protein uL22 from Fervidobacterium nodosum (strain ATCC 35602 / DSM 5306 / Rt17-B1).